Reading from the N-terminus, the 256-residue chain is Ubiquinone/menaquinone biosynthesis C-methyltransferase UbiE (256 aa).

S-adenosyl-L-methionine contacts are provided by residues Thr79, Asp100, and 128–129 (DA).

This sequence belongs to the class I-like SAM-binding methyltransferase superfamily. MenG/UbiE family.

The enzyme catalyses a 2-demethylmenaquinol + S-adenosyl-L-methionine = a menaquinol + S-adenosyl-L-homocysteine + H(+). It carries out the reaction a 2-methoxy-6-(all-trans-polyprenyl)benzene-1,4-diol + S-adenosyl-L-methionine = a 5-methoxy-2-methyl-3-(all-trans-polyprenyl)benzene-1,4-diol + S-adenosyl-L-homocysteine + H(+). It participates in quinol/quinone metabolism; menaquinone biosynthesis; menaquinol from 1,4-dihydroxy-2-naphthoate: step 2/2. It functions in the pathway cofactor biosynthesis; ubiquinone biosynthesis. Functionally, methyltransferase required for the conversion of demethylmenaquinol (DMKH2) to menaquinol (MKH2) and the conversion of 2-polyprenyl-6-methoxy-1,4-benzoquinol (DDMQH2) to 2-polyprenyl-3-methyl-6-methoxy-1,4-benzoquinol (DMQH2). This is Ubiquinone/menaquinone biosynthesis C-methyltransferase UbiE from Pseudomonas fluorescens (strain Pf0-1).